A 375-amino-acid chain; its full sequence is Chaperone protein DnaJ (375 aa).

The J domain occupies aspartate 5–glycine 70. Residues glycine 133–threonine 211 form a CR-type zinc finger. Residues cysteine 146, cysteine 149, cysteine 163, cysteine 166, cysteine 185, cysteine 188, cysteine 199, and cysteine 202 each coordinate Zn(2+). 4 CXXCXGXG motif repeats span residues cysteine 146–glycine 153, cysteine 163–glycine 170, cysteine 185–glycine 192, and cysteine 199–glycine 206.

It belongs to the DnaJ family. As to quaternary structure, homodimer. It depends on Zn(2+) as a cofactor.

The protein localises to the cytoplasm. Participates actively in the response to hyperosmotic and heat shock by preventing the aggregation of stress-denatured proteins and by disaggregating proteins, also in an autonomous, DnaK-independent fashion. Unfolded proteins bind initially to DnaJ; upon interaction with the DnaJ-bound protein, DnaK hydrolyzes its bound ATP, resulting in the formation of a stable complex. GrpE releases ADP from DnaK; ATP binding to DnaK triggers the release of the substrate protein, thus completing the reaction cycle. Several rounds of ATP-dependent interactions between DnaJ, DnaK and GrpE are required for fully efficient folding. Also involved, together with DnaK and GrpE, in the DNA replication of plasmids through activation of initiation proteins. This chain is Chaperone protein DnaJ, found in Coxiella burnetii (strain CbuK_Q154) (Coxiella burnetii (strain Q154)).